The following is a 414-amino-acid chain: Sensor protein CutS (414 aa).

Positions 1–15 are enriched in pro residues; the sequence is MATTPAPPGAPPKPT. The disordered stretch occupies residues 1–21; sequence MATTPAPPGAPPKPTWDPRSA. The next 2 helical transmembrane spans lie at 37-57 and 121-141; these read LLYG…IYLL and SLLA…AMAG. Residues 142–194 form the HAMP domain; the sequence is RVLSPLGRITRTARAVAGSDLSRRIELDGPDDELKELADTFDDMLERLQRAFT. Residues 202–414 form the Histidine kinase domain; that stretch reads NASHELRTPL…GLVMRVTLPV (213 aa). His-205 is subject to Phosphohistidine; by autocatalysis.

It localises to the cell membrane. It carries out the reaction ATP + protein L-histidine = ADP + protein N-phospho-L-histidine.. In terms of biological role, member of the two-component regulatory system CutS/CutR, involved in the regulation of copper metabolism. The protein is Sensor protein CutS (cutS) of Streptomyces coelicolor (strain ATCC BAA-471 / A3(2) / M145).